A 1811-amino-acid chain; its full sequence is Protein virilizer homolog (1811 aa).

An N-acetylalanine modification is found at Ala2. Residues 132 to 302 (ISHDRDSPPP…EGDDGYEQIS (171 aa)) are disordered. A phosphoserine mark is found at Ser133 and Ser138. A compositionally biased stretch (pro residues) spans 139-152 (PPPPPPPPPPPQPQ). Over residues 160 to 169 (KHADGEKEDQ) the composition is skewed to basic and acidic residues. Position 173 is a phosphoserine (Ser173). Residues 174 to 190 (PPRPQPRGPRTPPGPPP) are compositionally biased toward pro residues. Thr184 is subject to Phosphothreonine. Ser222 carries the post-translational modification Phosphoserine. A compositionally biased stretch (polar residues) spans 224 to 233 (DRNSVPQEGQ). Acidic residues-rich tracts occupy residues 234–267 (YSDE…DEDD) and 274–302 (IPDD…EQIS). Tyr913 is subject to Phosphotyrosine. Ser1578 bears the Phosphoserine mark. 2 disordered regions span residues 1615–1634 (HVVP…GIRP) and 1662–1811 (KEVV…SFTR). The span at 1688–1697 (GFSGNRGGRG) shows a compositional bias: gly residues. Thr1707 is modified (phosphothreonine). Residue Arg1722 is modified to Omega-N-methylarginine. Residues 1722-1747 (RGSSWSAQNTPRGNYNESRGGQSNFN) are compositionally biased toward polar residues. Arg1740 is subject to Asymmetric dimethylarginine; alternate. Omega-N-methylarginine; alternate is present on Arg1740. Arg1772, Arg1774, and Arg1792 each carry asymmetric dimethylarginine. The span at 1787-1801 (GSGGSRGKFVSGGSG) shows a compositional bias: gly residues. Over residues 1802–1811 (RGRHVRSFTR) the composition is skewed to basic residues.

Belongs to the vir family. As to quaternary structure, component of the WMM complex, a N6-methyltransferase complex composed of a catalytic subcomplex, named MAC, and of an associated subcomplex, named MACOM. The MAC subcomplex is composed of METTL3 and METTL14. The MACOM subcomplex is composed of WTAP, ZC3H13, CBLL1/HAKAI, VIRMA, and, in some cases of RBM15 (RBM15 or RBM15B). Interacts with WTAP. Also a component of a MACOM-like complex, named WTAP complex, composed of WTAP, ZC3H13, CBLL1, VIRMA, RBM15, BCLAF1 and THRAP3. Interacts with NUDT21 and CPSF6.

The protein localises to the nucleus speckle. The protein resides in the nucleus. It localises to the nucleoplasm. It is found in the cytoplasm. Its function is as follows. Associated component of the WMM complex, a complex that mediates N6-methyladenosine (m6A) methylation of RNAs, a modification that plays a role in the efficiency of mRNA splicing and RNA processing. Acts as a key regulator of m6A methylation by promoting m6A methylation of mRNAs in the 3'-UTR near the stop codon: recruits the catalytic core components METTL3 and METTL14, thereby guiding m6A methylation at specific sites. Required for mRNA polyadenylation via its role in selective m6A methylation: m6A methylation of mRNAs in the 3'-UTR near the stop codon correlating with alternative polyadenylation (APA). In Mus musculus (Mouse), this protein is Protein virilizer homolog.